A 187-amino-acid polypeptide reads, in one-letter code: Transmembrane protein 11-A, mitochondrial (187 aa).

Helical transmembrane passes span 79-95 (TAVLSGTACLLTPLALP) and 102-119 (VSLPAGVLSLACSTLYGI).

Belongs to the TMEM11 family.

It is found in the mitochondrion inner membrane. Plays a role in mitochondrial morphogenesis. This Xenopus laevis (African clawed frog) protein is Transmembrane protein 11-A, mitochondrial (tmem11-a).